Consider the following 563-residue polypeptide: MWGALRSVLRPCSRASVPRQRAYHGDAVARLGTQPDSGSSTYQENYEQMKALVNQLHERAQYVRLGGSEKARARHTSRGKLLPRDRIDNLIDPGSPFLEFSQFAGYKLYGEEEVPAGGIITGIGRVSGVECMIVANDATVKGGTYYPVTVKKHVRAQEIALQNRLPCIYLVDSGGANLPRQADTFPDRDHFGRIFYNQAIMSSKNITQIAVVMGSCTAGGAYVPAMADENIIVQRQGTIFLAGPPLVKAATGEEVSAEDLGGADLHCRRSGVTDHYALDDHHALHLTRKVVRSLNYQKKLDVTVEPSEEPLFPADELYGIVGANLKRSFDVREVIARIVDGSRFNEFKALYGDTLVTGFARIFGYPVGIIGNNGVLFSESAKKGAHFVQLCCQRNIPLLFLQNITGFMVGKDYEAEGIAKDGAKMVAAVSCAKVPKITVIIGGSYGAGNYGMCGRAYSPRFLYMWPNARISVMGGEQAATVLATVARDQRAREGKQFSSAEEAALKEPIIKRFEEEGNPYYSSARLWDDGIIDPVDTRLVLGLSISAALNAPIQRTDFGIFRM.

Residues 1 to 22 (MWGALRSVLRPCSRASVPRQRA) constitute a mitochondrion transit peptide. Positions 49–306 (MKALVNQLHE…QKKLDVTVEP (258 aa)) constitute a CoA carboxyltransferase N-terminal domain. Residues 49–555 (MKALVNQLHE…SAALNAPIQR (507 aa)) form a carboxyltransferase region. Lys-70 is modified (N6-acetyllysine; alternate). Position 70 is an N6-succinyllysine; alternate (Lys-70). An N6-succinyllysine modification is found at Lys-141. Residues 309–555 (EPLFPADELY…SAALNAPIQR (247 aa)) enclose the CoA carboxyltransferase C-terminal domain. Residues 343-372 (RFNEFKALYGDTLVTGFARIFGYPVGIIGN) form an acyl-CoA binding region. At Lys-433 the chain carries N6-succinyllysine. An N6-acetyllysine; alternate modification is found at Lys-495. An N6-succinyllysine; alternate modification is found at Lys-495. At Lys-511 the chain carries N6-acetyllysine.

The protein belongs to the AccD/PCCB family. Probably a dodecamer composed of six biotin-containing alpha subunits (MCCC1) and six beta (MCCC2) subunits.

The protein resides in the mitochondrion matrix. It catalyses the reaction 3-methylbut-2-enoyl-CoA + hydrogencarbonate + ATP = 3-methyl-(2E)-glutaconyl-CoA + ADP + phosphate + H(+). The protein operates within amino-acid degradation; L-leucine degradation; (S)-3-hydroxy-3-methylglutaryl-CoA from 3-isovaleryl-CoA: step 2/3. Functionally, carboxyltransferase subunit of the 3-methylcrotonyl-CoA carboxylase, an enzyme that catalyzes the conversion of 3-methylcrotonyl-CoA to 3-methylglutaconyl-CoA, a critical step for leucine and isovaleric acid catabolism. The protein is Methylcrotonoyl-CoA carboxylase beta chain, mitochondrial (Mccc2) of Rattus norvegicus (Rat).